A 347-amino-acid polypeptide reads, in one-letter code: MPFAQIVIGPPGSGKSTYCNGCSQFFNAIGRHSQVVNMDPANDALPYPCAVDIRDFITLEEIMQEQQLGPNGGLMYAVESLDNSIDLFILQIKSLVEEEKAYLVFDCPGQVELFTHHSSLFNIFKKMEKELDIRFCVVNLIDCFYMTSPSQYISILLLALRSMLMMDLPHINVFSKIDMLKSYGELPFRLDYYTEVQDLDYLEPYIEKEGSSVLGKKYSKLTETIKELVSDFNLVSFEVLSVDDKESMINLQGVIDKANGYIFGASEVGGDTVWAEASREGALIANYDIQDRWIDNKEKYDKEEEEKRTALLKEQELQNKAVDVNEEDEWENALKEWEEKQGMDFVR.

GTP is bound at residue 12 to 17 (GSGKST). The Gly-Pro-Asn (GPN)-loop; involved in dimer interface signature appears at 69–71 (GPN). 175–178 (SKID) lines the GTP pocket.

The protein belongs to the GPN-loop GTPase family. Heterodimers with NPA3/GPN1 or GPN3. Binds to RNA polymerase II (RNAPII).

It is found in the cytoplasm. Its function is as follows. Small GTPase required for proper localization of RNA polymerase II and III (RNAPII and RNAPIII). May act at an RNAP assembly step prior to nuclear import. Required for establishment of sister chromatid cohesion. The polypeptide is GPN-loop GTPase 2 (Saccharomyces cerevisiae (strain ATCC 204508 / S288c) (Baker's yeast)).